We begin with the raw amino-acid sequence, 101 residues long: Protein Tat (101 aa).

Residues 1-20 (MDPVDPNIEPWNQPGSQPKT) are disordered. Residues 1-24 (MDPVDPNIEPWNQPGSQPKTACNQ) are interaction with human CREBBP. The interval 1-48 (MDPVDPNIEPWNQPGSQPKTACNQCYCKRCCYHCQICFLKKGLGISNG) is transactivation. Residues Cys22, Cys25, and Cys27 each coordinate Zn(2+). The segment at 22 to 37 (CNQCYCKRCCYHCQIC) is cysteine-rich. Residue Lys28 is modified to N6-acetyllysine; by host PCAF. The Zn(2+) site is built by Cys30, His33, Cys34, and Cys37. Positions 38-48 (FLKKGLGISNG) are core. Residues 45–101 (ISNGRKKRRPRRTTPYNSENHQDPLRKQPLSQPRGEQTDPKESKKKVESKTKTDQFD) form a disordered region. The Nuclear localization signal, RNA-binding (TAR), and protein transduction motif lies at 49–57 (RKKRRPRRT). The interval 49–86 (RKKRRPRRTTPYNSENHQDPLRKQPLSQPRGEQTDPKE) is interaction with the host capping enzyme RNGTT. 2 positions are modified to N6-acetyllysine; by host EP300 and GCN5L2: Lys50 and Lys51. 2 positions are modified to asymmetric dimethylarginine; by host PRMT6: Arg52 and Arg53. Residue Lys71 forms a Glycyl lysine isopeptide (Lys-Gly) (interchain with G-Cter in ubiquitin) linkage. Positions 80–101 (EQTDPKESKKKVESKTKTDQFD) are enriched in basic and acidic residues.

This sequence belongs to the lentiviruses Tat family. As to quaternary structure, interacts with host CCNT1. Associates with the P-TEFb complex composed at least of Tat, P-TEFb (CDK9 and CCNT1), TAR RNA, RNA Pol II. Recruits the HATs CREBBP, TAF1/TFIID, EP300, PCAF and GCN5L2. Interacts with host KAT5/Tip60; this interaction targets the latter to degradation. Interacts with the host deacetylase SIRT1. Interacts with host capping enzyme RNGTT; this interaction stimulates RNGTT. Binds to host KDR, and to the host integrins ITGAV/ITGB3 and ITGA5/ITGB1. Interacts with host KPNB1/importin beta-1 without previous binding to KPNA1/importin alpha-1. Interacts with EIF2AK2. Interacts with host nucleosome assembly protein NAP1L1; this interaction may be required for the transport of Tat within the nucleus, since the two proteins interact at the nuclear rim. Interacts with host C1QBP/SF2P32; this interaction involves lysine-acetylated Tat. Interacts with the host chemokine receptors CCR2, CCR3 and CXCR4. Interacts with host DPP4/CD26; this interaction may trigger an anti-proliferative effect. Interacts with host LDLR. Interacts with the host extracellular matrix metalloproteinase MMP1. Interacts with host PRMT6; this interaction mediates Tat's methylation. Interacts with, and is ubiquitinated by MDM2/Hdm2. Interacts with host PSMC3 and HTATIP2. Interacts with STAB1; this interaction may overcome SATB1-mediated repression of IL2 and IL2RA (interleukin) in T cells by binding to the same domain than HDAC1. Interacts (when acetylated) with human CDK13, thereby increasing HIV-1 mRNA splicing and promoting the production of the doubly spliced HIV-1 protein Nef. Interacts with host TBP; this interaction modulates the activity of transcriptional pre-initiation complex. Interacts with host RELA. Interacts with host PLSCR1; this interaction negatively regulates Tat transactivation activity by altering its subcellular distribution. Asymmetrical arginine methylation by host PRMT6 seems to diminish the transactivation capacity of Tat and affects the interaction with host CCNT1. In terms of processing, acetylation by EP300, CREBBP, GCN5L2/GCN5 and PCAF regulates the transactivation activity of Tat. EP300-mediated acetylation of Lys-50 promotes dissociation of Tat from the TAR RNA through the competitive binding to PCAF's bromodomain. In addition, the non-acetylated Tat's N-terminus can also interact with PCAF. PCAF-mediated acetylation of Lys-28 enhances Tat's binding to CCNT1. Lys-50 is deacetylated by SIRT1. Post-translationally, polyubiquitination by host MDM2 does not target Tat to degradation, but activates its transactivation function and fosters interaction with CCNT1 and TAR RNA. Phosphorylated by EIF2AK2 on serine and threonine residues adjacent to the basic region important for TAR RNA binding and function. Phosphorylation of Tat by EIF2AK2 is dependent on the prior activation of EIF2AK2 by dsRNA.

Its subcellular location is the host nucleus. The protein resides in the host nucleolus. It localises to the host cytoplasm. The protein localises to the secreted. Its function is as follows. Transcriptional activator that increases RNA Pol II processivity, thereby increasing the level of full-length viral transcripts. Recognizes a hairpin structure at the 5'-LTR of the nascent viral mRNAs referred to as the transactivation responsive RNA element (TAR) and recruits the cyclin T1-CDK9 complex (P-TEFb complex) that will in turn hyperphosphorylate the RNA polymerase II to allow efficient elongation. The CDK9 component of P-TEFb and other Tat-activated kinases hyperphosphorylate the C-terminus of RNA Pol II that becomes stabilized and much more processive. Other factors such as HTATSF1/Tat-SF1, SUPT5H/SPT5, and HTATIP2 are also important for Tat's function. Besides its effect on RNA Pol II processivity, Tat induces chromatin remodeling of proviral genes by recruiting the histone acetyltransferases (HATs) CREBBP, EP300 and PCAF to the chromatin. This also contributes to the increase in proviral transcription rate, especially when the provirus integrates in transcriptionally silent region of the host genome. To ensure maximal activation of the LTR, Tat mediates nuclear translocation of NF-kappa-B by interacting with host RELA. Through its interaction with host TBP, Tat may also modulate transcription initiation. Tat can reactivate a latently infected cell by penetrating in it and transactivating its LTR promoter. In the cytoplasm, Tat is thought to act as a translational activator of HIV-1 mRNAs. In terms of biological role, extracellular circulating Tat can be endocytosed by surrounding uninfected cells via the binding to several surface receptors such as CD26, CXCR4, heparan sulfate proteoglycans (HSPG) or LDLR. Neurons are rarely infected, but they internalize Tat via their LDLR. Through its interaction with nuclear HATs, Tat is potentially able to control the acetylation-dependent cellular gene expression. Modulates the expression of many cellular genes involved in cell survival, proliferation or in coding for cytokines or cytokine receptors. Tat plays a role in T-cell and neurons apoptosis. Tat induced neurotoxicity and apoptosis probably contribute to neuroAIDS. Circulating Tat also acts as a chemokine-like and/or growth factor-like molecule that binds to specific receptors on the surface of the cells, affecting many cellular pathways. In the vascular system, Tat binds to ITGAV/ITGB3 and ITGA5/ITGB1 integrins dimers at the surface of endothelial cells and competes with bFGF for heparin-binding sites, leading to an excess of soluble bFGF. This Homo sapiens (Human) protein is Protein Tat.